The chain runs to 549 residues: Cation/acetate symporter ActP (549 aa).

The next 13 helical transmembrane spans lie at 33–53 (WQAIIMFLIFVVFTLGITYWA), 77–97 (LAIAGDYMSAASFLGISALVF), 103–123 (GLIYSLGFLVGWPIILFLIAE), 148–168 (ILSACGSLVVVALYLIAQMVG), 183–203 (IAVVLVGVLMMMYVLFGGMLA), 206–226 (WVQIIKAVLLLFGASFMAFMV), 262–282 (ISALSLGLGLMFGTAGLPHIL), 303–323 (GFMGYFYILTFIIGFGAIMLV), 355–375 (LFLGFISAVAFATILAVVAGL), 404–424 (VSKITVLILGVIAIILGVLFE), 428–448 (IAFMVGLAFAIAASCNFPIIL), 464–484 (GGWLGLITAVVLMILGPTIWV), and 493–513 (IFPYEYPALFSITVAFLGIWF).

The protein belongs to the sodium:solute symporter (SSF) (TC 2.A.21) family.

It is found in the cell inner membrane. In terms of biological role, transports acetate. The protein is Cation/acetate symporter ActP of Escherichia coli (strain ATCC 8739 / DSM 1576 / NBRC 3972 / NCIMB 8545 / WDCM 00012 / Crooks).